Consider the following 707-residue polypeptide: Choline transporter-like protein 4 (707 aa).

At 1 to 32 (MGKKQKENEAYGNSAKYDPSFRGPIKNRGCTD) the chain is on the cytoplasmic side. A helical transmembrane segment spans residues 33–53 (IICCVLFLVFILGYIVVGLVA). The Extracellular segment spans residues 54–227 (WVYGDPRQVL…KIFEDFAQSW (174 aa)). Residues Asn67, Asn185, Asn195, and Asn196 are each glycosylated (N-linked (GlcNAc...) asparagine). A helical membrane pass occupies residues 228-248 (YWILVALGVALVLSLLFILLL). Over 249-250 (RL) the chain is Cytoplasmic. A helical transmembrane segment spans residues 251–271 (VAAPLVLLLIVGVLAVLAYGI). The Extracellular segment spans residues 272–307 (YHCWQQYRELRDQGVSITQLGFTANLSAYQNVKETW). Asn296 carries N-linked (GlcNAc...) asparagine glycosylation. Residues 308–328 (LAALIILAVLEGVLLLMLIFL) traverse the membrane as a helical segment. Over 329–356 (RQRIRIAIALLKEASRAVGQMMSTMFYP) the chain is Cytoplasmic. A helical transmembrane segment spans residues 357–377 (LVTFVLLVICIGYWAVTALYL). At 378 to 452 (ATSGQPQYVY…GILGLFWTVN (75 aa)) the chain is on the extracellular side. Asn391, Asn403, and Asn413 each carry an N-linked (GlcNAc...) asparagine glycan. The chain crosses the membrane as a helical span at residues 453-473 (WVLALGQCVLAGAFASFYWAF). Over 474-498 (HKPRDIPTFPLSSAFIRTLRYHTGS) the chain is Cytoplasmic. A helical transmembrane segment spans residues 499–519 (LAFGALILTLVQIARVILEYI). Over 520-557 (DHKLRGSQNPVARCIICCFKCCLWCLEKFIKFLNRNAY) the chain is Extracellular. Residues 558–578 (IMIAIYGKNFCVSAKNAFMLL) form a helical membrane-spanning segment. The Cytoplasmic portion of the chain corresponds to 579–594 (MRNVVRVVVLDKVTDL). A helical membrane pass occupies residues 595–615 (LLFFGKLLVVGGVGVLSFFFF). Over 616–635 (SGRIKGLGKDFKNPDLNYYW) the chain is Extracellular. Residues 636-656 (LPIMTSIMGAYVIASGFFSVF) form a helical membrane-spanning segment. Over 657–707 (GMCVDTLFLCFLEDLERNDGSQERPYYMPKALLKILGKKNEVPTGGKNRKK) the chain is Cytoplasmic.

The protein belongs to the CTL (choline transporter-like) family. N-glycosylated; N-glycosylation of Asn-67 and Asn-391 is required for a proper thiamine pyrophosphate uptake. In terms of tissue distribution, highly expressed in intestine, kidney and stomach. Also expressed in testis and lung.

It is found in the membrane. Its subcellular location is the apical cell membrane. It carries out the reaction choline(out) + n H(+)(in) = choline(in) + n H(+)(out). The catalysed reaction is thiamine diphosphate(out) = thiamine diphosphate(in). Choline transporter that plays a role in the choline-acetylcholine system and is required to the efferent innervation of hair cells in the olivocochlear bundle for the maintenance of physiological function of outer hair cells and the protection of hair cells from acoustic injury. Also described as a thiamine pyrophosphate transporter in colon, may mediate the absorption of microbiota-generated thiamine pyrophosphate and contribute to host thiamine (vitamin B1) homeostasis. The polypeptide is Choline transporter-like protein 4 (Rattus norvegicus (Rat)).